Here is a 429-residue protein sequence, read N- to C-terminus: 3-phosphoshikimate 1-carboxyvinyltransferase (429 aa).

3 residues coordinate 3-phosphoshikimate: lysine 23, serine 24, and arginine 28. Lysine 23 provides a ligand contact to phosphoenolpyruvate. Residues glycine 95 and arginine 123 each coordinate phosphoenolpyruvate. 4 residues coordinate 3-phosphoshikimate: serine 168, glutamine 170, aspartate 316, and lysine 343. Residue glutamine 170 coordinates phosphoenolpyruvate. Aspartate 316 serves as the catalytic Proton acceptor. Phosphoenolpyruvate is bound by residues arginine 347 and arginine 389.

Belongs to the EPSP synthase family. In terms of assembly, monomer.

It localises to the cytoplasm. It catalyses the reaction 3-phosphoshikimate + phosphoenolpyruvate = 5-O-(1-carboxyvinyl)-3-phosphoshikimate + phosphate. It participates in metabolic intermediate biosynthesis; chorismate biosynthesis; chorismate from D-erythrose 4-phosphate and phosphoenolpyruvate: step 6/7. In terms of biological role, catalyzes the transfer of the enolpyruvyl moiety of phosphoenolpyruvate (PEP) to the 5-hydroxyl of shikimate-3-phosphate (S3P) to produce enolpyruvyl shikimate-3-phosphate and inorganic phosphate. The chain is 3-phosphoshikimate 1-carboxyvinyltransferase from Oceanobacillus iheyensis (strain DSM 14371 / CIP 107618 / JCM 11309 / KCTC 3954 / HTE831).